A 197-amino-acid chain; its full sequence is TATA-box-binding protein (197 aa).

Tandem repeats lie at residues 10–86 and 101–177.

Belongs to the TBP family.

In terms of biological role, general factor that plays a role in the activation of archaeal genes transcribed by RNA polymerase. Binds specifically to the TATA box promoter element which lies close to the position of transcription initiation. In Pyrobaculum neutrophilum (strain DSM 2338 / JCM 9278 / NBRC 100436 / V24Sta) (Thermoproteus neutrophilus), this protein is TATA-box-binding protein.